The primary structure comprises 157 residues: Ribosome maturation factor RimP (157 aa).

It belongs to the RimP family.

The protein resides in the cytoplasm. Required for maturation of 30S ribosomal subunits. The sequence is that of Ribosome maturation factor RimP from Synechococcus sp. (strain CC9311).